A 145-amino-acid polypeptide reads, in one-letter code: Selenoprotein M (145 aa).

The N-terminal stretch at 1 to 23 (MSILLSPPSLLLLLAALVAPATS) is a signal peptide. Active-site nucleophile residues include cysteine 45 and selenocysteine 48. A cross-link (cysteinyl-selenocysteine (Cys-Sec)) is located at residues 45 to 48 (CGGU). Position 48 (selenocysteine 48) is a non-standard amino acid, selenocysteine. The tract at residues 125–145 (PPEYLWAPAKPPEEASEHDDL) is disordered.

Belongs to the selenoprotein M/F family. As to expression, widely expressed. Highly expressed in brain.

It is found in the cytoplasm. It localises to the perinuclear region. The protein resides in the endoplasmic reticulum. Its subcellular location is the golgi apparatus. Functionally, may function as a thiol-disulfide oxidoreductase that participates in disulfide bond formation. The protein is Selenoprotein M of Mus musculus (Mouse).